We begin with the raw amino-acid sequence, 215 residues long: ATP-dependent dethiobiotin synthetase BioD (215 aa).

13-18 (DIGKTI) contributes to the ATP binding site. Residue Thr17 coordinates Mg(2+). The active site involves Lys38. Thr42 contributes to the substrate binding site. Residues Asp50, 115-118 (EGAG), and 175-176 (NH) each bind ATP. Mg(2+) is bound by residues Asp50 and Glu115.

Belongs to the dethiobiotin synthetase family. Homodimer. It depends on Mg(2+) as a cofactor.

The protein localises to the cytoplasm. The enzyme catalyses (7R,8S)-7,8-diammoniononanoate + CO2 + ATP = (4R,5S)-dethiobiotin + ADP + phosphate + 3 H(+). The protein operates within cofactor biosynthesis; biotin biosynthesis; biotin from 7,8-diaminononanoate: step 1/2. In terms of biological role, catalyzes a mechanistically unusual reaction, the ATP-dependent insertion of CO2 between the N7 and N8 nitrogen atoms of 7,8-diaminopelargonic acid (DAPA, also called 7,8-diammoniononanoate) to form a ureido ring. The sequence is that of ATP-dependent dethiobiotin synthetase BioD from Neisseria meningitidis serogroup A / serotype 4A (strain DSM 15465 / Z2491).